Reading from the N-terminus, the 126-residue chain is MVFNKFVQVGRVVYINYGADKGKLAVIVNIINQNRILIDGEHIVRQVIPIRRVHLTKFQIDNVELNQRTVLLKKKIAKFDLTKKYAETSFAKKQAIKTKRANLGDFDRFRVMVLKKKLARTSAKSK.

Belongs to the eukaryotic ribosomal protein eL14 family.

The chain is Large ribosomal subunit protein eL14 (RPL14) from Tetrahymena thermophila (strain SB210).